The chain runs to 211 residues: MKKIGLFGGTFNPLHNGHLQLAEFAAAQCQLDQVVFLPAASPPHKKGDEIVPFSHRAEMIRLACSRNKRFSCNTIEQDLARPSYTVDTLQALKTSPLYKSEAQFFFLIGVDAFIELKTWKAYRDLLSEINFILCPRKLFSRTQTVLFLTELGFVQTPLGWEHSSYLTLYELEGAPDQVSSTEVRRTFEKSGDLYQKLPPTVADYIMKHGLY.

The protein belongs to the NadD family.

It carries out the reaction nicotinate beta-D-ribonucleotide + ATP + H(+) = deamido-NAD(+) + diphosphate. It participates in cofactor biosynthesis; NAD(+) biosynthesis; deamido-NAD(+) from nicotinate D-ribonucleotide: step 1/1. Catalyzes the reversible adenylation of nicotinate mononucleotide (NaMN) to nicotinic acid adenine dinucleotide (NaAD). This chain is Probable nicotinate-nucleotide adenylyltransferase, found in Desulfotalea psychrophila (strain LSv54 / DSM 12343).